We begin with the raw amino-acid sequence, 171 residues long: 3-hydroxydecanoyl-[acyl-carrier-protein] dehydratase (171 aa).

H70 is a catalytic residue.

This sequence belongs to the thioester dehydratase family. FabA subfamily. Homodimer.

The protein localises to the cytoplasm. The enzyme catalyses a (3R)-hydroxyacyl-[ACP] = a (2E)-enoyl-[ACP] + H2O. The catalysed reaction is (3R)-hydroxydecanoyl-[ACP] = (2E)-decenoyl-[ACP] + H2O. It carries out the reaction (2E)-decenoyl-[ACP] = (3Z)-decenoyl-[ACP]. It participates in lipid metabolism; fatty acid biosynthesis. In terms of biological role, necessary for the introduction of cis unsaturation into fatty acids. Catalyzes the dehydration of (3R)-3-hydroxydecanoyl-ACP to E-(2)-decenoyl-ACP and then its isomerization to Z-(3)-decenoyl-ACP. Can catalyze the dehydratase reaction for beta-hydroxyacyl-ACPs with saturated chain lengths up to 16:0, being most active on intermediate chain length. This chain is 3-hydroxydecanoyl-[acyl-carrier-protein] dehydratase, found in Pseudomonas syringae pv. tomato (strain ATCC BAA-871 / DC3000).